Consider the following 292-residue polypeptide: Cyclin-dependent kinase 5 homolog (292 aa).

In terms of domain architecture, Protein kinase spans 4–285 (YSKIEKLGEG…AAAALKHPYF (282 aa)). Residues 10-18 (LGEGTYGIV) and Lys-33 each bind ATP. Thr-14 is subject to Phosphothreonine. A Phosphotyrosine modification is found at Tyr-15. The active-site Proton acceptor is the Asp-126.

The protein belongs to the protein kinase superfamily. CMGC Ser/Thr protein kinase family. CDC2/CDKX subfamily.

It carries out the reaction L-seryl-[protein] + ATP = O-phospho-L-seryl-[protein] + ADP + H(+). The catalysed reaction is L-threonyl-[protein] + ATP = O-phospho-L-threonyl-[protein] + ADP + H(+). Phosphorylation at Thr-14 or Tyr-15 inactivates the enzyme. The polypeptide is Cyclin-dependent kinase 5 homolog (cdk5) (Dictyostelium discoideum (Social amoeba)).